The following is a 495-amino-acid chain: F(420)H(2) dehydrogenase subunit M (495 aa).

15 helical membrane-spanning segments follow: residues 1-21 (MLPV…VTFF), 27-47 (LAAG…LYAY), 57-77 (MQFY…SVGI), 80-100 (VSMP…LFTW), 108-128 (NRFY…FVAL), 130-150 (FVVF…IVNL), 163-183 (FFIY…GLFY), 215-235 (IFLA…FHSW), 249-269 (ILFI…LPML), 277-297 (LMIM…ALLA), 315-335 (MGYV…GAMF), 338-358 (FSHG…QTAA), 378-398 (VAMM…GFIA), 412-432 (VFVV…LWAM), and 450-470 (INSI…YFGL).

The protein belongs to the complex I subunit 4 family. As to quaternary structure, the FPO complex is composed of at least 13 different subunits. FpoA, FpoH, FpoJ, FpoK, FpoL, FpoM and FpoN proteins constitute the membrane sector of the complex.

It localises to the cell membrane. The catalysed reaction is methanophenazine + reduced coenzyme F420-(gamma-L-Glu)(n) = dihydromethanophenazine + oxidized coenzyme F420-(gamma-L-Glu)(n) + H(+). Its function is as follows. Component of the F(420)H(2) dehydrogenase (FPO complex) which is part of the energy-conserving F(420)H(2):heterodisulfide oxidoreductase system. The membrane-bound electron transfer system of the complex plays an important role in the metabolism of methylotrophic methanogens when the organisms grow on methanol or methylamines. Catalyzes the oxidation of methanophenazine to dihydromethanophenazine. It shuttles electrons from F(420)H(2), via FAD and iron-sulfur (Fe-S) centers, to methanophenazine (an electron carrier in the membrane). It couples the redox reaction to proton translocation (for every two electrons transferred, two hydrogen ions are translocated across the cytoplasmic membrane), and thus conserves the redox energy in a proton gradient. It also catalyzes the oxidation of F(420)H(2) with quinones such as 2,3-dimethyl-1,4-naphthoquinone, 2-methyl-1,4-naphthoquinone and tetramethyl-p-benzoquinone. In Methanosarcina mazei (strain ATCC BAA-159 / DSM 3647 / Goe1 / Go1 / JCM 11833 / OCM 88) (Methanosarcina frisia), this protein is F(420)H(2) dehydrogenase subunit M (fpoM).